We begin with the raw amino-acid sequence, 126 residues long: Phosphoribosyl-AMP cyclohydrolase (126 aa).

Asp82 contributes to the Mg(2+) binding site. Cys83 lines the Zn(2+) pocket. Positions 84 and 86 each coordinate Mg(2+). Zn(2+) is bound by residues Cys99 and Cys106.

It belongs to the PRA-CH family. As to quaternary structure, homodimer. The cofactor is Mg(2+). It depends on Zn(2+) as a cofactor.

Its subcellular location is the cytoplasm. It carries out the reaction 1-(5-phospho-beta-D-ribosyl)-5'-AMP + H2O = 1-(5-phospho-beta-D-ribosyl)-5-[(5-phospho-beta-D-ribosylamino)methylideneamino]imidazole-4-carboxamide. The protein operates within amino-acid biosynthesis; L-histidine biosynthesis; L-histidine from 5-phospho-alpha-D-ribose 1-diphosphate: step 3/9. Catalyzes the hydrolysis of the adenine ring of phosphoribosyl-AMP. In Micrococcus luteus (strain ATCC 4698 / DSM 20030 / JCM 1464 / CCM 169 / CCUG 5858 / IAM 1056 / NBRC 3333 / NCIMB 9278 / NCTC 2665 / VKM Ac-2230) (Micrococcus lysodeikticus), this protein is Phosphoribosyl-AMP cyclohydrolase.